We begin with the raw amino-acid sequence, 1054 residues long: Trehalose synthase complex regulatory subunit TPS3 (1054 aa).

Residues 112-133 (AANSGIPPANNPVSSGSTAQRP) are disordered. A compositionally biased stretch (polar residues) spans 122–132 (NPVSSGSTAQR). A phosphoserine mark is found at serine 148, serine 150, and serine 181. Disordered stretches follow at residues 155–203 (ASSI…PVSK) and 223–250 (QQQASLPSMKRVSGSTAGDSSIASSSSN). Residues 170–182 (LSSSLMKNPNLSF) show a composition bias toward polar residues. Positions 235–249 (SGSTAGDSSIASSSS) are enriched in low complexity. At threonine 265 the chain carries Phosphothreonine. Residues serine 267 and serine 273 each carry the phosphoserine modification. Residues 287-778 (KFGGYSNNAK…SNQETSTVFN (492 aa)) are glycosyltransferase. Serine 960 is subject to Phosphoserine.

It in the N-terminal section; belongs to the glycosyltransferase 20 family. As to quaternary structure, the trehalose synthase complex is composed of the two catalytic subunits TPS1 and TPS2 and at least one of the two regulatory subunits TPS3 or TSL1.

It is found in the cytoplasm. Its function is as follows. Regulatory subunit of the trehalose synthase complex that catalyzes the production of trehalose from glucose-6-phosphate and UDP-glucose in a two step process. May stabilize the trehalose synthase complex. This Saccharomyces cerevisiae (strain ATCC 204508 / S288c) (Baker's yeast) protein is Trehalose synthase complex regulatory subunit TPS3 (TPS3).